Reading from the N-terminus, the 77-residue chain is Large ribosomal subunit protein bL31 (77 aa).

This sequence belongs to the bacterial ribosomal protein bL31 family. Type A subfamily. As to quaternary structure, part of the 50S ribosomal subunit.

In terms of biological role, binds the 23S rRNA. In Synechococcus elongatus (strain ATCC 33912 / PCC 7942 / FACHB-805) (Anacystis nidulans R2), this protein is Large ribosomal subunit protein bL31.